The chain runs to 249 residues: NAD(P)H-quinone oxidoreductase subunit K (249 aa).

Residues C65, C66, C130, and C161 each contribute to the [4Fe-4S] cluster site.

The protein belongs to the complex I 20 kDa subunit family. In terms of assembly, NDH-1 can be composed of about 15 different subunits; different subcomplexes with different compositions have been identified which probably have different functions. Requires [4Fe-4S] cluster as cofactor.

The protein resides in the cellular thylakoid membrane. The enzyme catalyses a plastoquinone + NADH + (n+1) H(+)(in) = a plastoquinol + NAD(+) + n H(+)(out). The catalysed reaction is a plastoquinone + NADPH + (n+1) H(+)(in) = a plastoquinol + NADP(+) + n H(+)(out). NDH-1 shuttles electrons from an unknown electron donor, via FMN and iron-sulfur (Fe-S) centers, to quinones in the respiratory and/or the photosynthetic chain. The immediate electron acceptor for the enzyme in this species is believed to be plastoquinone. Couples the redox reaction to proton translocation, and thus conserves the redox energy in a proton gradient. Cyanobacterial NDH-1 also plays a role in inorganic carbon-concentration. The polypeptide is NAD(P)H-quinone oxidoreductase subunit K (Prochlorococcus marinus (strain NATL2A)).